The chain runs to 714 residues: MDTVSAFKLEVRADKIAVITIDAPGEKMNTLKAEFGNQVRGLIRQVRDDKSVRGVVFISAKTDNFIAGADINMIARCRSAQEAEALARQGQQIMAEIHGLSIPVIAAIHGACLGGGLELALACHGRICSDDEKTRLGLPEVQLGLLPGSGGTQRLPRLIGVSTALDMMLTGRQLRARQALKAGLVDEVVPQAILLQAAVELALKGRPASRDMPVRERVLAGPLGRHLLFHFVGKQTQRKTQGNYPAVKRILQVVENGLAHGCSSGYAEEARAFGELAMTPQSQALRSIFFASTDLKKDRGAEAEPGPLTSIAVLGGGLMGGGIAYVTACKGGLPVRIKDIQPRGINHALKYSWDLLNKQVRQRRLRPSERDRQMAMISGATDYQGFAHRDVVIEAVFEDLALKQRMVSEVEQYCGPQTIFASNTSSLPIGDIAAQARRPGRVIGLHFFSPVEKMPLVEVIPHKGTDPQAIATVVQLAKRQGKTPIVVADKAGFYVNRILAPYINEAMRLLVEGEPVEEIDKALVKFGFPVGPIQLLDEVGIDTGTKIIPVLESAFGERFSSPANIIDAILKDDRKGRKNNRGFYLYETKGRKSKKRPDPAVYPLLGIDRPQSRLSAQQVAERCVMMMLNEAARCFDEQIIRSARDGDIGAVFGIGFPPFLGGPFRYMDTIGAGEVAAILQRLAAQYGPRFTPCDTLLRMAEQGTTFWPADERLT.

The interval 1-190 (MDTVSAFKLE…KAGLVDEVVP (190 aa)) is enoyl-CoA hydratase. The segment at 306 to 714 (GPLTSIAVLG…TFWPADERLT (409 aa)) is 3-hydroxyacyl-CoA dehydrogenase.

The protein in the N-terminal section; belongs to the enoyl-CoA hydratase/isomerase family. This sequence in the central section; belongs to the 3-hydroxyacyl-CoA dehydrogenase family. Heterotetramer of two alpha chains (FadJ) and two beta chains (FadI).

Its subcellular location is the cytoplasm. It carries out the reaction a (3S)-3-hydroxyacyl-CoA = a (2E)-enoyl-CoA + H2O. The catalysed reaction is a 4-saturated-(3S)-3-hydroxyacyl-CoA = a (3E)-enoyl-CoA + H2O. It catalyses the reaction a (3S)-3-hydroxyacyl-CoA + NAD(+) = a 3-oxoacyl-CoA + NADH + H(+). The enzyme catalyses (3S)-3-hydroxybutanoyl-CoA = (3R)-3-hydroxybutanoyl-CoA. It functions in the pathway lipid metabolism; fatty acid beta-oxidation. Catalyzes the formation of a hydroxyacyl-CoA by addition of water on enoyl-CoA. Also exhibits 3-hydroxyacyl-CoA epimerase and 3-hydroxyacyl-CoA dehydrogenase activities. The sequence is that of Fatty acid oxidation complex subunit alpha from Klebsiella pneumoniae (strain 342).